A 551-amino-acid polypeptide reads, in one-letter code: Glucose-6-phosphate isomerase 2 (551 aa).

The active-site Proton donor is the glutamate 359. Residues histidine 390 and lysine 514 contribute to the active site.

This sequence belongs to the GPI family.

It localises to the cytoplasm. The enzyme catalyses alpha-D-glucose 6-phosphate = beta-D-fructose 6-phosphate. It participates in carbohydrate biosynthesis; gluconeogenesis. Its pathway is carbohydrate degradation; glycolysis; D-glyceraldehyde 3-phosphate and glycerone phosphate from D-glucose: step 2/4. Catalyzes the reversible isomerization of glucose-6-phosphate to fructose-6-phosphate. The polypeptide is Glucose-6-phosphate isomerase 2 (Streptomyces coelicolor (strain ATCC BAA-471 / A3(2) / M145)).